The sequence spans 466 residues: MMHLILSCSYLISMDGYYNEASEEPSSSSSSGSLARSLFHEYRQSVIPLQNGHVPSMAFMNNLPYVEIRPQESQRLAFNDTQRLFYQMKIEASLREWFPEDFNRKSSPANSDYLRPPHYPSSSSSSLSPNNISEYSSLLFPLIPKPSTTTEAVNVPVLPPLAPINMIHPQHQEPLFRNRQREEEAMTQAILAVLTGPSSPPSTSSSPQRKGRATAFKRYYSMISDRGRAPLPSVRKQSMMTRAMSFYNRLNINQRERFTRENATTHGEGSGGSGGGGRYTSGPSATQLQHMISERKRREKLNESFQALRSLLPPGTKKDKASVLSIAREQLSSLQGEISKLLERNREVEAKLAGEREIENDLRPEERFNVRIRHIPESTSRERTLDLRVVLRGDIIRVDDLMIRLLEFLKQINNVSLVSIEARTLARAEGDTSIVLVISLRLKIEGEWDESAFQEAVRRVVADLAH.

Disordered stretches follow at residues 108-129 (PANS…SLSP), 194-213 (LTGP…KGRA), and 260-289 (RENA…TQLQ). The span at 120–129 (PSSSSSSLSP) shows a compositional bias: low complexity. The span at 268 to 279 (EGSGGSGGGGRY) shows a compositional bias: gly residues. Residues 285 to 334 (ATQLQHMISERKRREKLNESFQALRSLLPPGTKKDKASVLSIAREQLSSL) form the bHLH domain.

In terms of assembly, homodimer.

It is found in the nucleus. In Arabidopsis thaliana (Mouse-ear cress), this protein is Putative transcription factor bHLH041 (BHLH41).